Consider the following 253-residue polypeptide: 5-oxoprolinase subunit A (253 aa).

The protein belongs to the LamB/PxpA family. Forms a complex composed of PxpA, PxpB and PxpC.

It catalyses the reaction 5-oxo-L-proline + ATP + 2 H2O = L-glutamate + ADP + phosphate + H(+). Functionally, catalyzes the cleavage of 5-oxoproline to form L-glutamate coupled to the hydrolysis of ATP to ADP and inorganic phosphate. The polypeptide is 5-oxoprolinase subunit A (Bacillus cereus (strain ZK / E33L)).